Reading from the N-terminus, the 112-residue chain is UPF0060 membrane protein SCO3297 (112 aa).

The next 4 helical transmembrane spans lie at 8–28, 33–53, 62–82, and 88–108; these read ALFV…WQGV, GWLW…VATF, ILAA…VVAD, and RWDI…MWAP.

This sequence belongs to the UPF0060 family.

The protein localises to the cell membrane. The polypeptide is UPF0060 membrane protein SCO3297 (Streptomyces coelicolor (strain ATCC BAA-471 / A3(2) / M145)).